We begin with the raw amino-acid sequence, 297 residues long: TGF-beta receptor type-2 (297 aa).

The first 23 residues, 1–23, serve as a signal peptide directing secretion; sequence MGRGLLGGLWPLHVVLWTRIAST. The Extracellular segment spans residues 24–166; that stretch reads IPPHVPKSVN…NPDLLLVIFQ (143 aa). Intrachain disulfides connect cysteine 51–cysteine 84, cysteine 54–cysteine 71, cysteine 61–cysteine 67, cysteine 77–cysteine 101, cysteine 121–cysteine 136, and cysteine 138–cysteine 143. N-linked (GlcNAc...) asparagine glycans are attached at residues asparagine 70 and asparagine 94. The chain crosses the membrane as a helical span at residues 167-187; it reads VTGVSLLPPLGIAIAVIITFY. Topologically, residues 188-297 are cytoplasmic; sequence CYRVHRQQKL…KTEKDIFSDL (110 aa). Residues 244–297 enclose the Protein kinase domain; sequence IELDTLVGKGRFAEVYKAKLRQNTSEQFETVAVKIFPYEEYASWKTEKDIFSDL. ATP-binding positions include 250–258 and lysine 277; that span reads VGKGRFAEV.

Belongs to the protein kinase superfamily. TKL Ser/Thr protein kinase family. TGFB receptor subfamily. In terms of assembly, homodimer. Heterohexamer; TGFB1, TGFB2 and TGFB3 homodimeric ligands assemble a functional receptor composed of two TGFBR1 and TGFBR2 heterodimers to form a ligand-receptor heterohexamer. The respective affinity of TGFRB1 and TGFRB2 for the ligands may modulate the kinetics of assembly of the receptor and may explain the different biological activities of TGFB1, TGFB2 and TGFB3. Component of a complex composed of TSC22D1 (via N-terminus), TGFBR1 and TGFBR2; the interaction between TSC22D1 and TGFBR1 is inhibited by SMAD7 and promoted by TGFB1. Interacts with DAXX. Interacts with DYNLT4. Interacts with ZFYVE9; ZFYVE9 recruits SMAD2 and SMAD3 to the TGF-beta receptor. Interacts with and is activated by SCUBE3; this interaction does not affect TGFB1-binding to TGFBR2. Interacts with VPS39; this interaction is independent of the receptor kinase activity and of the presence of TGF-beta. Interacts with CLU. Mg(2+) is required as a cofactor. It depends on Mn(2+) as a cofactor. Phosphorylated on a Ser/Thr residue in the cytoplasmic domain.

The protein resides in the cell membrane. It localises to the membrane raft. The enzyme catalyses L-threonyl-[receptor-protein] + ATP = O-phospho-L-threonyl-[receptor-protein] + ADP + H(+). It carries out the reaction L-seryl-[receptor-protein] + ATP = O-phospho-L-seryl-[receptor-protein] + ADP + H(+). Functionally, transmembrane serine/threonine kinase forming with the TGF-beta type I serine/threonine kinase receptor, TGFBR1, the non-promiscuous receptor for the TGF-beta cytokines TGFB1, TGFB2 and TGFB3. Transduces the TGFB1, TGFB2 and TGFB3 signal from the cell surface to the cytoplasm and is thus regulating a plethora of physiological and pathological processes including cell cycle arrest in epithelial and hematopoietic cells, control of mesenchymal cell proliferation and differentiation, wound healing, extracellular matrix production, immunosuppression and carcinogenesis. The formation of the receptor complex composed of 2 TGFBR1 and 2 TGFBR2 molecules symmetrically bound to the cytokine dimer results in the phosphorylation and the activation of TGFRB1 by the constitutively active TGFBR2. Activated TGFBR1 phosphorylates SMAD2 which dissociates from the receptor and interacts with SMAD4. The SMAD2-SMAD4 complex is subsequently translocated to the nucleus where it modulates the transcription of the TGF-beta-regulated genes. This constitutes the canonical SMAD-dependent TGF-beta signaling cascade. Also involved in non-canonical, SMAD-independent TGF-beta signaling pathways. In Sus scrofa (Pig), this protein is TGF-beta receptor type-2 (TGFBR2).